Reading from the N-terminus, the 191-residue chain is Protein GrpE (191 aa).

2 stretches are compositionally biased toward basic and acidic residues: residues 1 to 19 (MKDEHNQEHDHLSQKEPES) and 29 to 42 (QQGEEKQEASEKEC). A disordered region spans residues 1 to 42 (MKDEHNQEHDHLSQKEPESYQKACACKEQQGEEKQEASEKEC).

It belongs to the GrpE family. In terms of assembly, homodimer.

It is found in the cytoplasm. Participates actively in the response to hyperosmotic and heat shock by preventing the aggregation of stress-denatured proteins, in association with DnaK and GrpE. It is the nucleotide exchange factor for DnaK and may function as a thermosensor. Unfolded proteins bind initially to DnaJ; upon interaction with the DnaJ-bound protein, DnaK hydrolyzes its bound ATP, resulting in the formation of a stable complex. GrpE releases ADP from DnaK; ATP binding to DnaK triggers the release of the substrate protein, thus completing the reaction cycle. Several rounds of ATP-dependent interactions between DnaJ, DnaK and GrpE are required for fully efficient folding. This chain is Protein GrpE, found in Helicobacter pylori (strain HPAG1).